The sequence spans 248 residues: Deoxyribose-phosphate aldolase (248 aa).

The active-site Proton donor/acceptor is the aspartate 117. The active-site Schiff-base intermediate with acetaldehyde is the lysine 179. Lysine 208 (proton donor/acceptor) is an active-site residue.

It belongs to the DeoC/FbaB aldolase family. DeoC type 1 subfamily.

It is found in the cytoplasm. The catalysed reaction is 2-deoxy-D-ribose 5-phosphate = D-glyceraldehyde 3-phosphate + acetaldehyde. Its pathway is carbohydrate degradation; 2-deoxy-D-ribose 1-phosphate degradation; D-glyceraldehyde 3-phosphate and acetaldehyde from 2-deoxy-alpha-D-ribose 1-phosphate: step 2/2. In terms of biological role, catalyzes a reversible aldol reaction between acetaldehyde and D-glyceraldehyde 3-phosphate to generate 2-deoxy-D-ribose 5-phosphate. The chain is Deoxyribose-phosphate aldolase from Thermotoga petrophila (strain ATCC BAA-488 / DSM 13995 / JCM 10881 / RKU-1).